The sequence spans 351 residues: Phosphoribosylformylglycinamidine cyclo-ligase (351 aa).

The protein belongs to the AIR synthase family.

It is found in the cytoplasm. The catalysed reaction is 2-formamido-N(1)-(5-O-phospho-beta-D-ribosyl)acetamidine + ATP = 5-amino-1-(5-phospho-beta-D-ribosyl)imidazole + ADP + phosphate + H(+). It functions in the pathway purine metabolism; IMP biosynthesis via de novo pathway; 5-amino-1-(5-phospho-D-ribosyl)imidazole from N(2)-formyl-N(1)-(5-phospho-D-ribosyl)glycinamide: step 2/2. The chain is Phosphoribosylformylglycinamidine cyclo-ligase from Oleidesulfovibrio alaskensis (strain ATCC BAA-1058 / DSM 17464 / G20) (Desulfovibrio alaskensis).